Here is a 258-residue protein sequence, read N- to C-terminus: Acetylglutamate kinase (258 aa).

Substrate contacts are provided by residues 44-45 (GG), R66, and N158. Residues 181–186 (DVSGIL) and 209–211 (IIT) each bind ATP.

Belongs to the acetylglutamate kinase family. ArgB subfamily. As to quaternary structure, homodimer.

Its subcellular location is the cytoplasm. The catalysed reaction is N-acetyl-L-glutamate + ATP = N-acetyl-L-glutamyl 5-phosphate + ADP. The protein operates within amino-acid biosynthesis; L-arginine biosynthesis; N(2)-acetyl-L-ornithine from L-glutamate: step 2/4. Its function is as follows. Catalyzes the ATP-dependent phosphorylation of N-acetyl-L-glutamate. The polypeptide is Acetylglutamate kinase (Salmonella arizonae (strain ATCC BAA-731 / CDC346-86 / RSK2980)).